Consider the following 148-residue polypeptide: Transcriptional regulator MraZ (148 aa).

2 SpoVT-AbrB domains span residues 5-51 (VSIL…PEPN) and 80-123 (AETL…NAEE).

The protein belongs to the MraZ family. In terms of assembly, forms oligomers.

It is found in the cytoplasm. Its subcellular location is the nucleoid. The chain is Transcriptional regulator MraZ from Chromobacterium violaceum (strain ATCC 12472 / DSM 30191 / JCM 1249 / CCUG 213 / NBRC 12614 / NCIMB 9131 / NCTC 9757 / MK).